A 378-amino-acid polypeptide reads, in one-letter code: Mannitol-1-phosphate 5-dehydrogenase (378 aa).

4 to 15 (SVHFGAGNIGRG) is a binding site for NAD(+).

This sequence belongs to the mannitol dehydrogenase family.

The enzyme catalyses D-mannitol 1-phosphate + NAD(+) = beta-D-fructose 6-phosphate + NADH + H(+). This chain is Mannitol-1-phosphate 5-dehydrogenase, found in Streptococcus pneumoniae serotype 4 (strain ATCC BAA-334 / TIGR4).